Reading from the N-terminus, the 880-residue chain is Leucine--tRNA ligase (880 aa).

A 'HIGH' region motif is present at residues 46–56; it reads PYPSGALHMGH. A 'KMSKS' region motif is present at residues 638 to 642; it reads KMSKS. K641 lines the ATP pocket.

The protein belongs to the class-I aminoacyl-tRNA synthetase family.

It localises to the cytoplasm. It carries out the reaction tRNA(Leu) + L-leucine + ATP = L-leucyl-tRNA(Leu) + AMP + diphosphate. The polypeptide is Leucine--tRNA ligase (Xanthomonas oryzae pv. oryzae (strain MAFF 311018)).